We begin with the raw amino-acid sequence, 349 residues long: Small ribosomal subunit protein uS2 (349 aa).

This sequence belongs to the universal ribosomal protein uS2 family.

The polypeptide is Small ribosomal subunit protein uS2 (Methylocella silvestris (strain DSM 15510 / CIP 108128 / LMG 27833 / NCIMB 13906 / BL2)).